The primary structure comprises 386 residues: DNase toxin Tse7 (386 aa).

As to quaternary structure, interacts with Tsi7.

It catalyses the reaction Endonucleolytic cleavage to 5'-phosphodinucleotide and 5'-phosphooligonucleotide end-products.. Functionally, type VI secretion exported toxin that via to its DNase activity induces growth arrest and ultimately DNA degradation within target cell. The activity is initially neutralized by a cognate immunity protein Tsi7. This Pseudomonas aeruginosa (strain ATCC 15692 / DSM 22644 / CIP 104116 / JCM 14847 / LMG 12228 / 1C / PRS 101 / PAO1) protein is DNase toxin Tse7.